Reading from the N-terminus, the 665-residue chain is MTSSCSLSRPQHLFFFFFLFVPFLSLGQQISVDINSAIWEFPSNPLCLSQQSNFAKSSQFSKNLDSLVSSIPSLKSNTYNFYSLSVGSISDQERVEAIGICNRVVNRVDCLNCIAQAAVNLTTMYCPQHRGAYVRATKCMFRYSDKPIFGKLETSPVLEAPNPSNATGDRNEFIRLQSELLNRLRSMAASGGSKRKYAQGTDPGSPPYTTFFGAVQCTPDLSEKDCNDCLSYGFSNATKGRVGIRWFCPSCNFQIESDLRFFLLDSEYEPDPKPGNDKVKIIIATVCSVIGFAIIAVFLYFFMTRNRRTAKQRHEGKDLEELMIKDAQLLQLDFDTIRLATNDFSRDNQLGEGGFGAVYKGVLDYGEEIAVKRLSMKSGQGDNEFINEVSLVAKLQHRNLVRLLGFCLQGEERILIYEFFKNTSLDHYIFDSNRRMILDWETRYRIISGVARGLLYLHEDSRFKIVHRDMKASNVLLDDAMNPKIADFGMAKLFDTDQTSQTRFTSKVAGTYGYMAPEYAMSGEFSVKTDVFSFGVLVLEIIKGKKNNWSPEEDSSLFLLSYVWKSWREGEVLNIVDPSLVETIGVSDEIMKCIHIGLLCVQENAESRPTMASVVVMLNANSFTLPRPSQPAFYSGDGESLSRDKNQINHIASLNDVTITEFDAR.

The first 27 residues, 1 to 27, serve as a signal peptide directing secretion; it reads MTSSCSLSRPQHLFFFFFLFVPFLSLG. The Extracellular segment spans residues 28-280; sequence QQISVDINSA…DPKPGNDKVK (253 aa). Gnk2-homologous domains are found at residues 42–148 and 154–260; these read PSNP…DKPI and TSPV…SDLR. Asn-120, Asn-165, and Asn-236 each carry an N-linked (GlcNAc...) asparagine glycan. Residues 281–301 traverse the membrane as a helical segment; the sequence is IIIATVCSVIGFAIIAVFLYF. The Cytoplasmic segment spans residues 302–665; that stretch reads FMTRNRRTAK…DVTITEFDAR (364 aa). Positions 344-624 constitute a Protein kinase domain; sequence FSRDNQLGEG…VVMLNANSFT (281 aa). Residues 350-358 and Lys-372 contribute to the ATP site; that span reads LGEGGFGAV. A Phosphotyrosine modification is found at Tyr-417. The active-site Proton acceptor is Asp-469. Phosphoserine is present on Ser-473. Thr-511 bears the Phosphothreonine mark. At Tyr-519 the chain carries Phosphotyrosine.

The protein belongs to the protein kinase superfamily. Ser/Thr protein kinase family. CRK subfamily.

The protein localises to the membrane. The catalysed reaction is L-seryl-[protein] + ATP = O-phospho-L-seryl-[protein] + ADP + H(+). It catalyses the reaction L-threonyl-[protein] + ATP = O-phospho-L-threonyl-[protein] + ADP + H(+). This is Cysteine-rich receptor-like protein kinase 41 (CRK41) from Arabidopsis thaliana (Mouse-ear cress).